We begin with the raw amino-acid sequence, 352 residues long: Biotin synthase (352 aa).

The region spanning Asn44–Gln262 is the Radical SAM core domain. [4Fe-4S] cluster-binding residues include Cys59, Cys63, and Cys66. 4 residues coordinate [2Fe-2S] cluster: Cys103, Cys134, Cys194, and Arg266.

This sequence belongs to the radical SAM superfamily. Biotin synthase family. In terms of assembly, homodimer. [4Fe-4S] cluster serves as cofactor. Requires [2Fe-2S] cluster as cofactor.

The enzyme catalyses (4R,5S)-dethiobiotin + (sulfur carrier)-SH + 2 reduced [2Fe-2S]-[ferredoxin] + 2 S-adenosyl-L-methionine = (sulfur carrier)-H + biotin + 2 5'-deoxyadenosine + 2 L-methionine + 2 oxidized [2Fe-2S]-[ferredoxin]. Its pathway is cofactor biosynthesis; biotin biosynthesis; biotin from 7,8-diaminononanoate: step 2/2. Functionally, catalyzes the conversion of dethiobiotin (DTB) to biotin by the insertion of a sulfur atom into dethiobiotin via a radical-based mechanism. The chain is Biotin synthase from Pseudomonas savastanoi pv. phaseolicola (strain 1448A / Race 6) (Pseudomonas syringae pv. phaseolicola (strain 1448A / Race 6)).